Here is a 167-residue protein sequence, read N- to C-terminus: Signal peptidase complex subunit 3A (167 aa).

Over 1 to 11 (MHTFGYRANAL) the chain is Cytoplasmic. A helical; Signal-anchor for type II membrane protein transmembrane segment spans residues 12 to 32 (LTFAVTALAFICAIASFSDKF). Residues 33–167 (SNQNPSAEIQ…PGYSLPDAYR (135 aa)) lie on the Lumenal side of the membrane. An N-linked (GlcNAc...) asparagine glycan is attached at N136.

It belongs to the SPCS3 family. In terms of assembly, component of the signal peptidase complex (SPC) composed of a catalytic subunit SEC11 and three accessory subunits SPCS1, SPCS2 and SPCS3. The complex induces a local thinning of the ER membrane which is used to measure the length of the signal peptide (SP) h-region of protein substrates. This ensures the selectivity of the complex towards h-regions shorter than 18-20 amino acids.

It is found in the endoplasmic reticulum membrane. Functionally, essential component of the signal peptidase complex (SPC) which catalyzes the cleavage of N-terminal signal sequences from nascent proteins as they are translocated into the lumen of the endoplasmic reticulum. Essential for the SPC catalytic activity, possibly by stabilizing and positioning the active center of the complex close to the lumenal surface. This Arabidopsis thaliana (Mouse-ear cress) protein is Signal peptidase complex subunit 3A.